A 469-amino-acid chain; its full sequence is Lipase A (469 aa).

Residues 1–22 form the signal peptide; that stretch reads MMFLTQLVSALFLFFLGPISYG. The segment covering 40–51 has biased composition (pro residues); sequence PSEDPFYQPPPG. A disordered region spans residues 40-59; it reads PSEDPFYQPPPGYEETEPGT. N111 carries an N-linked (GlcNAc...) asparagine glycan. C129 and C304 are oxidised to a cystine. Active-site charge relay system residues include S217, D361, and H393. A disulfide bridge links C377 with C421.

Belongs to the AB hydrolase superfamily. Lipase family. Class Lip subfamily. Monomer.

The protein localises to the secreted. It catalyses the reaction a triacylglycerol + H2O = a diacylglycerol + a fatty acid + H(+). Its function is as follows. Hydrolyzes triglycerides, with a preference for substrates with short-chain lengths (C4 to C8). The chain is Lipase A from Arthroderma benhamiae (strain ATCC MYA-4681 / CBS 112371) (Trichophyton mentagrophytes).